Reading from the N-terminus, the 117-residue chain is Ribosome-binding factor A (117 aa).

The protein belongs to the RbfA family. As to quaternary structure, monomer. Binds 30S ribosomal subunits, but not 50S ribosomal subunits or 70S ribosomes.

The protein resides in the cytoplasm. One of several proteins that assist in the late maturation steps of the functional core of the 30S ribosomal subunit. Associates with free 30S ribosomal subunits (but not with 30S subunits that are part of 70S ribosomes or polysomes). Required for efficient processing of 16S rRNA. May interact with the 5'-terminal helix region of 16S rRNA. The protein is Ribosome-binding factor A of Leuconostoc mesenteroides subsp. mesenteroides (strain ATCC 8293 / DSM 20343 / BCRC 11652 / CCM 1803 / JCM 6124 / NCDO 523 / NBRC 100496 / NCIMB 8023 / NCTC 12954 / NRRL B-1118 / 37Y).